Consider the following 198-residue polypeptide: Ribonuclease HII (198 aa).

The 188-residue stretch at 11-198 folds into the RNase H type-2 domain; it reads ELIAGVDEVG…SPVRKLLENE (188 aa). A divalent metal cation is bound by residues D17, E18, and D109.

It belongs to the RNase HII family. It depends on Mn(2+) as a cofactor. Requires Mg(2+) as cofactor.

The protein resides in the cytoplasm. It catalyses the reaction Endonucleolytic cleavage to 5'-phosphomonoester.. Functionally, endonuclease that specifically degrades the RNA of RNA-DNA hybrids. The chain is Ribonuclease HII from Mannheimia succiniciproducens (strain KCTC 0769BP / MBEL55E).